The primary structure comprises 346 residues: MNQYIDFNSTIYPFPPKPAFLSKDEKKHYREKIKRLLKQQDAVMVAHYYTDPEIQALAEETGGCVADSLEMARFGNNHPASTLLVAGVRFMGETAKILNPEKRVLMPTLEAECSLDLGCPEKEFTQFCDDHPDRTVVVYANTSAAVKARADWVVTSSIAVELIDYLDSQGKKIIWAPDRHLGNYVRKQTGADILCWQGACIVHDEFKTQALIRVKGLHPDAAVLVHPESPQAVIDLADAVGSTSQLIKSAQSLPHQKLIVATDKGIFYKMQQACPEKQLFAAPTAGEGASCRSCAHCPWMAMNGLQAIVQGLEQGGGQHEILVEKELREKALVPLNRMLDFAAQLK.

H47 and S68 together coordinate iminosuccinate. C113 contacts [4Fe-4S] cluster. Residues 139–141 (YAN) and S156 contribute to the iminosuccinate site. C200 contacts [4Fe-4S] cluster. Iminosuccinate-binding positions include 226–228 (HPE) and T243. Residue C297 participates in [4Fe-4S] cluster binding.

Belongs to the quinolinate synthase family. Type 1 subfamily. Requires [4Fe-4S] cluster as cofactor.

It localises to the cytoplasm. The enzyme catalyses iminosuccinate + dihydroxyacetone phosphate = quinolinate + phosphate + 2 H2O + H(+). The protein operates within cofactor biosynthesis; NAD(+) biosynthesis; quinolinate from iminoaspartate: step 1/1. Catalyzes the condensation of iminoaspartate with dihydroxyacetone phosphate to form quinolinate. In Photorhabdus laumondii subsp. laumondii (strain DSM 15139 / CIP 105565 / TT01) (Photorhabdus luminescens subsp. laumondii), this protein is Quinolinate synthase.